Reading from the N-terminus, the 210-residue chain is Ribosomal RNA large subunit methyltransferase E (210 aa).

Residues G67, W69, D87, D103, and D128 each coordinate S-adenosyl-L-methionine. K168 serves as the catalytic Proton acceptor.

This sequence belongs to the class I-like SAM-binding methyltransferase superfamily. RNA methyltransferase RlmE family.

Its subcellular location is the cytoplasm. It catalyses the reaction uridine(2552) in 23S rRNA + S-adenosyl-L-methionine = 2'-O-methyluridine(2552) in 23S rRNA + S-adenosyl-L-homocysteine + H(+). Its function is as follows. Specifically methylates the uridine in position 2552 of 23S rRNA at the 2'-O position of the ribose in the fully assembled 50S ribosomal subunit. The protein is Ribosomal RNA large subunit methyltransferase E of Psychrobacter sp. (strain PRwf-1).